The chain runs to 510 residues: GMP synthase [glutamine-hydrolyzing] (510 aa).

The 191-residue stretch at 5 to 195 folds into the Glutamine amidotransferase type-1 domain; the sequence is PILVVNFGSQ…IYGVCKAEKN (191 aa). The active-site Nucleophile is the cysteine 82. Residues histidine 169 and glutamate 171 contribute to the active site. One can recognise a GMPS ATP-PPase domain in the interval 196–385; it reads WEMGDFIHEK…LGVPEEILRR (190 aa). 223 to 229 lines the ATP pocket; it reads SGGVDST.

Homodimer.

It carries out the reaction XMP + L-glutamine + ATP + H2O = GMP + L-glutamate + AMP + diphosphate + 2 H(+). Its pathway is purine metabolism; GMP biosynthesis; GMP from XMP (L-Gln route): step 1/1. Catalyzes the synthesis of GMP from XMP. The chain is GMP synthase [glutamine-hydrolyzing] (guaA) from Aquifex aeolicus (strain VF5).